The primary structure comprises 365 residues: Parathion hydrolase (365 aa).

The segment at residues 1–29 (MQTRRVVLKSAAAAGTLLGGLAGCASVAG) is a signal peptide (tat-type signal). Zn(2+) contacts are provided by His-55, His-57, Lys-169, His-201, His-230, and Asp-301. The residue at position 169 (Lys-169) is an N6-carboxylysine.

The protein belongs to the metallo-dependent hydrolases superfamily. Phosphotriesterase family. In terms of assembly, homodimer. Zn(2+) serves as cofactor. In terms of processing, predicted to be exported by the Tat system. The position of the signal peptide cleavage has been experimentally proven.

The protein resides in the cell membrane. It carries out the reaction An aryl dialkyl phosphate + H2O = dialkyl phosphate + an aryl alcohol.. Functionally, has an unusual substrate specificity for synthetic organophosphate triesters and phosphorofluoridates. All of the phosphate triesters found to be substrates are synthetic compounds. The identity of any naturally occurring substrate for the enzyme is unknown. Has no detectable activity with phosphate monoesters or diesters and no activity as an esterase or protease. It catalyzes the hydrolysis of the insecticide paraoxon at a rate approaching the diffusion limit and thus appears to be optimally evolved for utilizing this synthetic substrate. This Brevundimonas diminuta (Pseudomonas diminuta) protein is Parathion hydrolase (opd).